Consider the following 96-residue polypeptide: Large ribosomal subunit protein uL23 (96 aa).

This sequence belongs to the universal ribosomal protein uL23 family. Part of the 50S ribosomal subunit. Contacts protein L29, and trigger factor when it is bound to the ribosome.

Its function is as follows. One of the early assembly proteins it binds 23S rRNA. One of the proteins that surrounds the polypeptide exit tunnel on the outside of the ribosome. Forms the main docking site for trigger factor binding to the ribosome. The protein is Large ribosomal subunit protein uL23 of Onion yellows phytoplasma (strain OY-M).